The primary structure comprises 211 residues: Methylthioribulose-1-phosphate dehydratase (211 aa).

Residues histidine 105 and histidine 107 each contribute to the Zn(2+) site.

This sequence belongs to the aldolase class II family. MtnB subfamily. It depends on Zn(2+) as a cofactor.

The catalysed reaction is 5-(methylsulfanyl)-D-ribulose 1-phosphate = 5-methylsulfanyl-2,3-dioxopentyl phosphate + H2O. It functions in the pathway amino-acid biosynthesis; L-methionine biosynthesis via salvage pathway; L-methionine from S-methyl-5-thio-alpha-D-ribose 1-phosphate: step 2/6. Catalyzes the dehydration of methylthioribulose-1-phosphate (MTRu-1-P) into 2,3-diketo-5-methylthiopentyl-1-phosphate (DK-MTP-1-P). The chain is Methylthioribulose-1-phosphate dehydratase from Acidiphilium cryptum (strain JF-5).